The following is a 236-amino-acid chain: UPF0257 lipoprotein YnfC (236 aa).

The signal sequence occupies residues 1-16 (MKKPLLLTLLCMILAG). Residue cysteine 17 is the site of N-palmitoyl cysteine attachment. Residue cysteine 17 is the site of S-diacylglycerol cysteine attachment.

This sequence belongs to the UPF0257 family.

The protein resides in the cell membrane. The polypeptide is UPF0257 lipoprotein YnfC (Salmonella typhi).